A 274-amino-acid chain; its full sequence is Large ribosomal subunit protein uL2cz/uL2cy (274 aa).

2 disordered regions span residues 1–22 (MAIHLYKTSTPSTRNGAVDSQV) and 225–252 (PVDHPHGGGEGRAPIGRKKPVTPWGYPA).

Belongs to the universal ribosomal protein uL2 family. As to quaternary structure, part of the 50S ribosomal subunit.

Its subcellular location is the plastid. It is found in the chloroplast. The sequence is that of Large ribosomal subunit protein uL2cz/uL2cy (rpl2-A) from Barbarea verna (Land cress).